We begin with the raw amino-acid sequence, 90 residues long: Translation initiation factor IF-1 (90 aa).

The 70-residue stretch at 7–76 (KEDVIRMEGT…TRGRIVYRKK (70 aa)) folds into the S1-like domain.

Belongs to the IF-1 family. As to quaternary structure, component of the 30S ribosomal translation pre-initiation complex which assembles on the 30S ribosome in the order IF-2 and IF-3, IF-1 and N-formylmethionyl-tRNA(fMet); mRNA recruitment can occur at any time during PIC assembly.

The protein resides in the cytoplasm. One of the essential components for the initiation of protein synthesis. Stabilizes the binding of IF-2 and IF-3 on the 30S subunit to which N-formylmethionyl-tRNA(fMet) subsequently binds. Helps modulate mRNA selection, yielding the 30S pre-initiation complex (PIC). Upon addition of the 50S ribosomal subunit IF-1, IF-2 and IF-3 are released leaving the mature 70S translation initiation complex. This Fervidobacterium nodosum (strain ATCC 35602 / DSM 5306 / Rt17-B1) protein is Translation initiation factor IF-1.